A 219-amino-acid chain; its full sequence is Cytochrome b6 (219 aa).

The chain crosses the membrane as a helical span at residues I32–F52. C35 lines the heme c pocket. H86 and H100 together coordinate heme b. 3 consecutive transmembrane segments (helical) span residues S90–F110, L116–Y136, and A190–I210. Heme b-binding residues include H191 and H206.

Belongs to the cytochrome b family. PetB subfamily. As to quaternary structure, the 4 large subunits of the cytochrome b6-f complex are cytochrome b6, subunit IV (17 kDa polypeptide, PetD), cytochrome f and the Rieske protein, while the 4 small subunits are PetG, PetL, PetM and PetN. The complex functions as a dimer. Heme b serves as cofactor. It depends on heme c as a cofactor.

It is found in the plastid. The protein resides in the chloroplast thylakoid membrane. Its function is as follows. Component of the cytochrome b6-f complex, which mediates electron transfer between photosystem II (PSII) and photosystem I (PSI), cyclic electron flow around PSI, and state transitions. In Amphidinium operculatum (Dinoflagellate), this protein is Cytochrome b6.